The chain runs to 637 residues: Chaperone protein HtpG (637 aa).

The tract at residues 1–347 is a; substrate-binding; sequence MTQSVHAETH…SNDLPLNVSR (347 aa). The interval 348 to 564 is b; sequence EILQDNKVTV…NHGMSTQMIK (217 aa). Residues 565 to 637 form a c region; it reads LMRAAGQPVP…SRINRLLLQA (73 aa).

Belongs to the heat shock protein 90 family. Homodimer.

The protein localises to the cytoplasm. Its function is as follows. Molecular chaperone. Has ATPase activity. The chain is Chaperone protein HtpG from Aeromonas salmonicida (strain A449).